The sequence spans 436 residues: 3-ketoacyl-CoA thiolase (436 aa).

Cys99 serves as the catalytic Acyl-thioester intermediate. Catalysis depends on proton acceptor residues His392 and Cys422.

This sequence belongs to the thiolase-like superfamily. Thiolase family. As to quaternary structure, heterotetramer of two alpha chains (FadJ) and two beta chains (FadI).

The protein resides in the cytoplasm. The catalysed reaction is an acyl-CoA + acetyl-CoA = a 3-oxoacyl-CoA + CoA. It functions in the pathway lipid metabolism; fatty acid beta-oxidation. In terms of biological role, catalyzes the final step of fatty acid oxidation in which acetyl-CoA is released and the CoA ester of a fatty acid two carbons shorter is formed. The polypeptide is 3-ketoacyl-CoA thiolase (Shigella boydii serotype 4 (strain Sb227)).